We begin with the raw amino-acid sequence, 108 residues long: Cell division topological specificity factor (108 aa).

The protein belongs to the MinE family.

In terms of biological role, prevents the cell division inhibition by proteins MinC and MinD at internal division sites while permitting inhibition at polar sites. This ensures cell division at the proper site by restricting the formation of a division septum at the midpoint of the long axis of the cell. The protein is Cell division topological specificity factor of Prochlorococcus marinus (strain AS9601).